An 880-amino-acid polypeptide reads, in one-letter code: Alanine--tRNA ligase (880 aa).

Zn(2+) is bound by residues His-567, His-571, Cys-669, and His-673.

This sequence belongs to the class-II aminoacyl-tRNA synthetase family. Zn(2+) serves as cofactor.

It is found in the cytoplasm. It catalyses the reaction tRNA(Ala) + L-alanine + ATP = L-alanyl-tRNA(Ala) + AMP + diphosphate. Functionally, catalyzes the attachment of alanine to tRNA(Ala) in a two-step reaction: alanine is first activated by ATP to form Ala-AMP and then transferred to the acceptor end of tRNA(Ala). Also edits incorrectly charged Ser-tRNA(Ala) and Gly-tRNA(Ala) via its editing domain. The protein is Alanine--tRNA ligase of Bacillus cereus (strain ZK / E33L).